The primary structure comprises 223 residues: Serum amyloid P-component (223 aa).

The signal sequence occupies residues 1-19 (MNKPLLWISVLTSLLEAFA). Residues 24 to 223 (SGKVFVFPRE…YVIIKPLVWV (200 aa)) form the Pentraxin (PTX) domain. Asn51 carries an N-linked (GlcNAc...) asparagine glycan. Cys55 and Cys114 are joined by a disulfide. Ca(2+)-binding residues include Asp77, Asn78, Glu155, Gln156, Asp157, and Gln167.

Belongs to the pentraxin family. Homopentamer. Pentraxin (or pentaxin) have a discoid arrangement of 5 non-covalently bound subunits. The cofactor is Ca(2+). N-glycosylated with a complex biantennary oligosaccharide chain with a sialic acid at the end (disialo-SAP). Monosialo-SAP as well as asioalo-SAP are also detected. In terms of tissue distribution, found in serum and urine.

It localises to the secreted. Functionally, can interact with DNA and histones and may scavenge nuclear material released from damaged circulating cells. May also function as a calcium-dependent lectin. This chain is Serum amyloid P-component (APCS), found in Homo sapiens (Human).